The following is a 170-amino-acid chain: MSAPQTTGDRAVIKLLSDALKALNLQNLAQTQFQEEVMPATAPSTDPAVPKDAQEADEPSIDALKSKIAGYERMFAFNCQLLGYLMEEIDGGSPDWMKVPCYLFLIIQSSTLTPIATGAIPKGMVKDVISRLPPKYKERCHAADKNEDWQALMLGITDLMDVVSLSLPPS.

Positions 35–57 are disordered; that stretch reads EEVMPATAPSTDPAVPKDAQEAD.

This is an uncharacterized protein from Candida tsukubaensis (Yeast).